The following is a 295-amino-acid chain: Probable dTDP-4,6-dihydroxy-2-methyloxan-3-one 4-ketoreductase (295 aa).

NADH is bound by residues G10–L12, D36–V37, A60–T62, Y126, and K130. NADPH is bound by residues M11–L12, D36–V37, A60–T62, Y126, and K130. Y126 (proton donor/acceptor) is an active-site residue.

The protein belongs to the dTDP-4-dehydrorhamnose reductase family. It depends on Mg(2+) as a cofactor.

It functions in the pathway antibiotic biosynthesis. In terms of biological role, involved in the biosynthesis of one of the two 2,6-deoxysugars, dTDP-L-oleandrose, attached to the macrolactone ring oleandolide to produce the aglycone antibiotic oleandomycin. Probably catalyzes the reduction of dTDP-4-keto-2,6-dideoxy-beta-L-galactose to yield dTDP-L-olivose. This Streptomyces antibioticus protein is Probable dTDP-4,6-dihydroxy-2-methyloxan-3-one 4-ketoreductase.